The following is a 277-amino-acid chain: 2,3,4,5-tetrahydropyridine-2,6-dicarboxylate N-succinyltransferase (277 aa).

2 residues coordinate substrate: Arg-106 and Asp-143.

Belongs to the transferase hexapeptide repeat family. In terms of assembly, homotrimer.

The protein resides in the cytoplasm. It catalyses the reaction (S)-2,3,4,5-tetrahydrodipicolinate + succinyl-CoA + H2O = (S)-2-succinylamino-6-oxoheptanedioate + CoA. It functions in the pathway amino-acid biosynthesis; L-lysine biosynthesis via DAP pathway; LL-2,6-diaminopimelate from (S)-tetrahydrodipicolinate (succinylase route): step 1/3. In Xylella fastidiosa (strain 9a5c), this protein is 2,3,4,5-tetrahydropyridine-2,6-dicarboxylate N-succinyltransferase.